The sequence spans 122 residues: Large ribosomal subunit protein uL14c (122 aa).

This sequence belongs to the universal ribosomal protein uL14 family. As to quaternary structure, part of the 50S ribosomal subunit.

It is found in the plastid. It localises to the chloroplast. Binds to 23S rRNA. This chain is Large ribosomal subunit protein uL14c, found in Physcomitrium patens (Spreading-leaved earth moss).